Here is a 280-residue protein sequence, read N- to C-terminus: Tryptophan synthase alpha chain (280 aa).

Active-site proton acceptor residues include Glu50 and Asp61.

The protein belongs to the TrpA family. As to quaternary structure, tetramer of two alpha and two beta chains.

The catalysed reaction is (1S,2R)-1-C-(indol-3-yl)glycerol 3-phosphate + L-serine = D-glyceraldehyde 3-phosphate + L-tryptophan + H2O. It participates in amino-acid biosynthesis; L-tryptophan biosynthesis; L-tryptophan from chorismate: step 5/5. Its function is as follows. The alpha subunit is responsible for the aldol cleavage of indoleglycerol phosphate to indole and glyceraldehyde 3-phosphate. The polypeptide is Tryptophan synthase alpha chain (Methylorubrum extorquens (strain CM4 / NCIMB 13688) (Methylobacterium extorquens)).